A 229-amino-acid chain; its full sequence is Claudin-25 (229 aa).

At 1–10 (MAWSFRAKVQ) the chain is on the cytoplasmic side. A helical transmembrane segment spans residues 11–31 (LGGLLLSLLGWVCSCVTTILP). The Extracellular segment spans residues 32-81 (QWKTLNLELNEMETWIMGIWEVCVDREEVATVCKAFESFLSLPQELQVAR). The chain crosses the membrane as a helical span at residues 82–102 (ILMVASHGLGLLGLLLCSFGS). The Cytoplasmic segment spans residues 103–124 (ECFQFHRIRWVFKRRLGLLGRT). Residues 125-145 (LEASASATTLLPVSWVAHATI) traverse the membrane as a helical segment. At 146-164 (QDFWDDSIPDIIPRWEFGG) the chain is on the extracellular side. The chain crosses the membrane as a helical span at residues 165 to 185 (ALYLGWAAGIFLALGGLLLIF). The Cytoplasmic portion of the chain corresponds to 186–229 (SACLGKEDVPFPLMAGPTVPLSCAPVEESDGSFHLMLRPRNLVI).

Belongs to the claudin family.

The protein localises to the cell junction. Its subcellular location is the tight junction. It is found in the cell membrane. Functionally, plays a major role in tight junction-specific obliteration of the intercellular space, through calcium-independent cell-adhesion activity. This Homo sapiens (Human) protein is Claudin-25 (CLDN25).